Here is a 266-residue protein sequence, read N- to C-terminus: Gas vesicle protein L (266 aa).

Belongs to the gas vesicle GvpF/GvpL family.

Its subcellular location is the gas vesicle. In terms of biological role, might be involved in nucleating gas vesicle formation. A minor component of the gas vesicle. Gas vesicles are hollow, gas filled proteinaceous nanostructures found in some microorganisms. It is not clear what function gas vesicles perform in soil bacteria. This is Gas vesicle protein L from Streptomyces sp. (strain CB03234).